Reading from the N-terminus, the 1911-residue chain is MEVKKSSYNNREVATQKKGRRFVMILKFFLLGNPLSLCMKIINSVVIVGLYYGFMTTFSIGPSYLFLLRAWLMEEGTEKQISATTGFIMGQLIIFISIYYAPLHLALGKPHTMTVLVLPYLLFNFFWNNNKNFLDYRSTTRNSIRNFNIQCIFLNNFIFQLFNHFILPSSTLARLVNIYMFRCNNKMLFVTSTFIGWLIGHIFFIKCVGLVLFWIRQNHSIQSNKYLLSELRNSLARIFSILLFITCVYYLGRMPLPIITKKLKETSETEESEENEEESDIEITSEPKEQDEEEGSTEENLYFGYEEKEDLYKINETNKIPVNGKEKTKDEFHFKETYYKDSPVYEDSYLDRYQEQELWELESKEDKNLFWFEKPLVTFLFDCKRWNRPFRYIKNDRFENAVRNEMSQYFFYTCPSDGKQRISFTYPPSLSTFSEMIERKISLYTTEKLSHEDNYWVYTNEQKKHTLSNELINRIKTLEKKTGSLVLDVLEKRIRLCNDENEKECLPKMYDPFLNGPYRGKITKLDSRSIRDDLITSTDAEESIEIVWINKIHGLLPIPNDSPKKEFEYQKNLFDGEFLSTNSGHSSTSIGEVPLEYPPSLNLKKLSLLAEEKRMDSEKQAKCLQLIFDVVTTDYNDQTIRNQNNKLIFPGIEEIRKEVPRWSYKLTDDLEEQEEENEEESMEDHEIRSRKAKRVVIYTDKEETTNAISNTSDSDQAEEVALIRYSQQSDFRRDLIKGSMRAQRRKTVIWEMFQANVHSPLFLDQIDKTFFLSFDISEMMNLVFRGWVGRESEFKISDSEEEETKEREKNKEKKEENERITISETWDSIIFAQAIRGSMLVTQSILRKYIVLPSLIIAKNVGRMLLFQFPEWYEDLKDWNREMHVKCTYNGVQLSETEFPKDWLTDGIQIKILFPFRLKPWRKSKVRPHHRDTMKKKGKKNNFCFLTVWGREAELPFGSPRKQPSFFQPIWKELNNKIRKLEKTFSLSLVLRVSKKTRKWFLKISKEKTRWVNKIVLVIKRIMKELEKINPIFLFGFGKVKVYESNENRKDSIISNKTTDESTIRIRSTNWTKHSLIEKKVKDLADRTTTIRNQIEQITKDKKKIVVTPGISISPNKTNCADKNSELQKPIWQIFKRKSTRLIRKFYYFLKYFIERIYSDILLCTINSLRTNAQLFLESTKKMINKFFYHDETNQEGIDQTNQNTIHFISTMQKSLSNISNKNSNISCDLSSLSQAYVFYTLSQVQVNNKYYLRSVFQYHGTHLFLKDRIKDYCGTRGLFDYKPKHKKVDKSGINEWKNWLKSHYQYNLSQTQWSRLVPQKWRNRVNQRCTIQKKDSIILDSYKKNQLIHYVKQNDYGIDSWTGQKEKLKKNYKYDLLAHKYMNYEDGGDSYIYASPLQVNRDPKIPYNFNTQKTQKPESFYALVGIDISDYLGEESSLYGEKNLDRKYFDCRILRFCFRKNIDIDIWTNMHIGTKINKNTKAGTQNYQKWDNKDIYPLTIHQKTKPSTSNKRKKLFDWMGMNKERLYRPISNLESWFFPEFGLLYDAYKLKPWIIPIQFLLLNIHRNTNLSPNNNINGNQKKDLNLRSNKKEYLELENQNQQEKKQKLSQRDLGSDTQQDTQKQKKKEDGEKNYTESTIKKRRKKKQFKSKKEAELDFFLKKYFLFQLRWDDSLNQRMINNIKVYCLLLRLINLKEIAISSIQRGEMRLDVMLIQKDLSLTELIKRGIFIIEPVRLSIKWDEEFFIYQTLGISLVNKSKQQSETDRRYIQKYLDENPFDKSISRHSTMLVSEDKNYYDLFVPENILSTRRRRELRILICFNSWKGNVVDVDRNFIFFNENDIRNCGQFLKKDKHFNTDPNKNKLMKLKLFLWPNYRLEDLACMNRYWFDTNNGSRFSMSRIQMYPQFRIY.

6 helical membrane passes run Ile-41–Gly-61, Ile-81–Leu-103, Gly-108–Asn-128, Phe-147–Leu-167, Ile-195–Ile-215, and Ile-238–Ile-258. Disordered regions lie at residues Glu-265 to Glu-299, Asp-798 to Asn-817, and Asn-1599 to Lys-1647. Acidic residues predominate over residues Glu-268–Thr-297. 2 stretches are compositionally biased toward basic and acidic residues: residues Gln-1603–Gly-1615 and Gln-1623–Tyr-1635.

Belongs to the TIC214 family. Part of the Tic complex.

It localises to the plastid. It is found in the chloroplast inner membrane. In terms of biological role, involved in protein precursor import into chloroplasts. May be part of an intermediate translocation complex acting as a protein-conducting channel at the inner envelope. This chain is Protein TIC 214, found in Lemna minor (Common duckweed).